Consider the following 221-residue polypeptide: GTP cyclohydrolase III (221 aa).

Belongs to the archaeal-type GTP cyclohydrolase family.

It catalyses the reaction GTP + 3 H2O = 2-amino-5-formylamino-6-(5-phospho-D-ribosylamino)pyrimidin-4(3H)-one + 2 phosphate + 2 H(+). Catalyzes the formation of 2-amino-5-formylamino-6-ribofuranosylamino-4(3H)-pyrimidinone ribonucleotide monophosphate and inorganic phosphate from GTP. Also has an independent pyrophosphate phosphohydrolase activity. This chain is GTP cyclohydrolase III, found in Pyrobaculum aerophilum (strain ATCC 51768 / DSM 7523 / JCM 9630 / CIP 104966 / NBRC 100827 / IM2).